The sequence spans 1054 residues: Acid trehalase (1054 aa).

Positions 1 to 21 (MRFKSVFTLLPLLAQLPSGGA) are cleaved as a signal peptide. N-linked (GlcNAc...) asparagine glycans are attached at residues N47, N135, N176, N283, and N307. 448 to 449 (WD) is a binding site for substrate. Residues N493, N513, N570, and N578 are each glycosylated (N-linked (GlcNAc...) asparagine). E584 functions as the Proton donor in the catalytic mechanism. Residues N618 and N644 are each glycosylated (N-linked (GlcNAc...) asparagine). Position 650–651 (650–651 (KQ)) interacts with substrate. N-linked (GlcNAc...) asparagine glycosylation is found at N665, N734, N803, N826, N838, N903, N937, N966, and N992.

The protein belongs to the glycosyl hydrolase 65 family.

It carries out the reaction alpha,alpha-trehalose + H2O = alpha-D-glucose + beta-D-glucose. The polypeptide is Acid trehalase (treA) (Emericella nidulans (strain FGSC A4 / ATCC 38163 / CBS 112.46 / NRRL 194 / M139) (Aspergillus nidulans)).